A 167-amino-acid polypeptide reads, in one-letter code: ATP synthase subunit b (167 aa).

The chain crosses the membrane as a helical span at residues 7 to 25; the sequence is SFWLTISFVIFVYLIYRPA.

This sequence belongs to the ATPase B chain family. F-type ATPases have 2 components, F(1) - the catalytic core - and F(0) - the membrane proton channel. F(1) has five subunits: alpha(3), beta(3), gamma(1), delta(1), epsilon(1). F(0) has three main subunits: a(1), b(2) and c(10-14). The alpha and beta chains form an alternating ring which encloses part of the gamma chain. F(1) is attached to F(0) by a central stalk formed by the gamma and epsilon chains, while a peripheral stalk is formed by the delta and b chains.

Its subcellular location is the cell inner membrane. In terms of biological role, f(1)F(0) ATP synthase produces ATP from ADP in the presence of a proton or sodium gradient. F-type ATPases consist of two structural domains, F(1) containing the extramembraneous catalytic core and F(0) containing the membrane proton channel, linked together by a central stalk and a peripheral stalk. During catalysis, ATP synthesis in the catalytic domain of F(1) is coupled via a rotary mechanism of the central stalk subunits to proton translocation. Component of the F(0) channel, it forms part of the peripheral stalk, linking F(1) to F(0). The sequence is that of ATP synthase subunit b from Rickettsia prowazekii (strain Madrid E).